The chain runs to 124 residues: Small ribosomal subunit protein uS12 (124 aa).

The tract at residues 1 to 32 (MPTIQQLVRKGRQDKVSKNKTPALKGSPQRRG) is disordered. At aspartate 89 the chain carries 3-methylthioaspartic acid.

The protein belongs to the universal ribosomal protein uS12 family. Part of the 30S ribosomal subunit. Contacts proteins S8 and S17. May interact with IF1 in the 30S initiation complex.

In terms of biological role, with S4 and S5 plays an important role in translational accuracy. Interacts with and stabilizes bases of the 16S rRNA that are involved in tRNA selection in the A site and with the mRNA backbone. Located at the interface of the 30S and 50S subunits, it traverses the body of the 30S subunit contacting proteins on the other side and probably holding the rRNA structure together. The combined cluster of proteins S8, S12 and S17 appears to hold together the shoulder and platform of the 30S subunit. The polypeptide is Small ribosomal subunit protein uS12 (Nocardioides sp. (strain ATCC BAA-499 / JS614)).